The primary structure comprises 233 residues: Orotidine 5'-phosphate decarboxylase (233 aa).

Substrate-binding positions include Asp10, Lys32, 60 to 69 (DLKLHDIPAT), Thr115, Arg176, Gln185, Gly205, and Arg206. Lys62 acts as the Proton donor in catalysis.

It belongs to the OMP decarboxylase family. Type 1 subfamily. As to quaternary structure, homodimer.

It carries out the reaction orotidine 5'-phosphate + H(+) = UMP + CO2. It participates in pyrimidine metabolism; UMP biosynthesis via de novo pathway; UMP from orotate: step 2/2. Catalyzes the decarboxylation of orotidine 5'-monophosphate (OMP) to uridine 5'-monophosphate (UMP). This is Orotidine 5'-phosphate decarboxylase from Thermobifida fusca (strain YX).